A 458-amino-acid polypeptide reads, in one-letter code: Acyl-CoA-binding domain-containing protein 5 (458 aa).

In terms of domain architecture, ACB spans histidine 8–valine 97. Residues isoleucine 19 to phenylalanine 28, tyrosine 39 to lysine 43, lysine 65, and tyrosine 84 contribute to the an acyl-CoA site. 2 disordered regions span residues lysine 119–aspartate 248 and threonine 296–glycine 369. The span at glycine 125–asparagine 139 shows a compositional bias: polar residues. Residues alanine 154 to glutamine 188 are a coiled coil. 3 stretches are compositionally biased toward basic and acidic residues: residues histidine 177–alanine 195, glutamate 303–glutamine 313, and threonine 322–serine 338. Gly residues predominate over residues glycine 343–glycine 356. A coiled-coil region spans residues glutamate 373 to serine 402. The helical transmembrane segment at glycine 430–leucine 450 threads the bilayer.

This sequence belongs to the ATG37 family.

It localises to the peroxisome membrane. Acyl-CoA binding protein which acts as the peroxisome receptor for pexophagy but is dispensable for aggrephagy and nonselective autophagy. Binds medium- and long-chain acyl-CoA esters. This chain is Acyl-CoA-binding domain-containing protein 5 (acbd5), found in Xenopus tropicalis (Western clawed frog).